We begin with the raw amino-acid sequence, 901 residues long: Protein translocase subunit SecA (901 aa).

Residues Gln87, 105–109, and Asp512 contribute to the ATP site; that span reads GEGKT. Positions 859 to 901 are disordered; it reads HQDDDSAAAAALAAQTGERKVGRNDPCPCGSGKKYKQCHGRLQ. Residues Cys885, Cys887, Cys896, and His897 each coordinate Zn(2+). Positions 891-901 are enriched in basic residues; it reads KKYKQCHGRLQ.

This sequence belongs to the SecA family. In terms of assembly, monomer and homodimer. Part of the essential Sec protein translocation apparatus which comprises SecA, SecYEG and auxiliary proteins SecDF-YajC and YidC. It depends on Zn(2+) as a cofactor.

It localises to the cell inner membrane. The protein resides in the cytoplasm. The enzyme catalyses ATP + H2O + cellular proteinSide 1 = ADP + phosphate + cellular proteinSide 2.. In terms of biological role, part of the Sec protein translocase complex. Interacts with the SecYEG preprotein conducting channel. Has a central role in coupling the hydrolysis of ATP to the transfer of proteins into and across the cell membrane, serving both as a receptor for the preprotein-SecB complex and as an ATP-driven molecular motor driving the stepwise translocation of polypeptide chains across the membrane. The protein is Protein translocase subunit SecA of Escherichia coli (strain 55989 / EAEC).